Reading from the N-terminus, the 321-residue chain is Biotin synthase (321 aa).

The Radical SAM core domain maps to 45 to 271 (FFGKKVKLNM…INPSKEIRIA (227 aa)). [4Fe-4S] cluster-binding residues include C63, C67, and C70. 4 residues coordinate [2Fe-2S] cluster: C106, C139, C199, and R269.

It belongs to the radical SAM superfamily. Biotin synthase family. As to quaternary structure, homodimer. Requires [4Fe-4S] cluster as cofactor. It depends on [2Fe-2S] cluster as a cofactor.

It carries out the reaction (4R,5S)-dethiobiotin + (sulfur carrier)-SH + 2 reduced [2Fe-2S]-[ferredoxin] + 2 S-adenosyl-L-methionine = (sulfur carrier)-H + biotin + 2 5'-deoxyadenosine + 2 L-methionine + 2 oxidized [2Fe-2S]-[ferredoxin]. Its pathway is cofactor biosynthesis; biotin biosynthesis; biotin from 7,8-diaminononanoate: step 2/2. Its function is as follows. Catalyzes the conversion of dethiobiotin (DTB) to biotin by the insertion of a sulfur atom into dethiobiotin via a radical-based mechanism. The sequence is that of Biotin synthase from Staphylococcus haemolyticus (strain JCSC1435).